Consider the following 688-residue polypeptide: Glycine--tRNA ligase beta subunit (688 aa).

It belongs to the class-II aminoacyl-tRNA synthetase family. Tetramer of two alpha and two beta subunits.

Its subcellular location is the cytoplasm. It carries out the reaction tRNA(Gly) + glycine + ATP = glycyl-tRNA(Gly) + AMP + diphosphate. The sequence is that of Glycine--tRNA ligase beta subunit (glyS) from Haemophilus influenzae (strain ATCC 51907 / DSM 11121 / KW20 / Rd).